The sequence spans 390 residues: Methylthioribose-1-phosphate isomerase (390 aa).

Residue Asp258 is the Proton donor of the active site.

The protein belongs to the eIF-2B alpha/beta/delta subunits family. MtnA subfamily.

It is found in the cytoplasm. The protein resides in the nucleus. It catalyses the reaction 5-(methylsulfanyl)-alpha-D-ribose 1-phosphate = 5-(methylsulfanyl)-D-ribulose 1-phosphate. Its pathway is amino-acid biosynthesis; L-methionine biosynthesis via salvage pathway; L-methionine from S-methyl-5-thio-alpha-D-ribose 1-phosphate: step 1/6. Catalyzes the interconversion of methylthioribose-1-phosphate (MTR-1-P) into methylthioribulose-1-phosphate (MTRu-1-P). In Coccidioides posadasii (strain C735) (Valley fever fungus), this protein is Methylthioribose-1-phosphate isomerase.